A 226-amino-acid chain; its full sequence is 3-dehydroquinate dehydratase (226 aa).

3-dehydroquinate-binding positions include glutamate 30–arginine 32 and arginine 62. Histidine 118 acts as the Proton donor/acceptor in catalysis. The Schiff-base intermediate with substrate role is filled by lysine 143. Positions 186, 205, and 209 each coordinate 3-dehydroquinate.

The protein belongs to the type-I 3-dehydroquinase family. In terms of assembly, homodimer.

It carries out the reaction 3-dehydroquinate = 3-dehydroshikimate + H2O. It functions in the pathway metabolic intermediate biosynthesis; chorismate biosynthesis; chorismate from D-erythrose 4-phosphate and phosphoenolpyruvate: step 3/7. Functionally, involved in the third step of the chorismate pathway, which leads to the biosynthesis of aromatic amino acids. Catalyzes the cis-dehydration of 3-dehydroquinate (DHQ) and introduces the first double bond of the aromatic ring to yield 3-dehydroshikimate. The sequence is that of 3-dehydroquinate dehydratase from Streptococcus equi subsp. zooepidemicus (strain H70).